The sequence spans 91 residues: Non-specific lipid-transfer protein 1 (91 aa).

4 cysteine pairs are disulfide-bonded: Cys3-Cys50, Cys13-Cys27, Cys28-Cys73, and Cys48-Cys87.

This sequence belongs to the plant LTP family.

Functionally, plant non-specific lipid-transfer proteins transfer phospholipids as well as galactolipids across membranes. May play a role in wax or cutin deposition in the cell walls of expanding epidermal cells and certain secretory tissues. The chain is Non-specific lipid-transfer protein 1 from Prunus armeniaca (Apricot).